The sequence spans 176 residues: MTTIVSVRRHGKVVMAGDGQVSLGNTVMKGNAKKVRRLYHGQVLAGFAGATADAFTLFERFEGQLEKHQGHLVRAAVELAKDWRTDRSLSRLEAMLAVANKDASLIITGNGDVVEPEEGLIAMGSGGNFAQAAARALLMKTDLSALEVAQTALGIAGDICVFTNHHQTIEELDAAE.

The active site involves Thr-2. 3 residues coordinate Na(+): Gly-157, Cys-160, and Thr-163.

Belongs to the peptidase T1B family. HslV subfamily. A double ring-shaped homohexamer of HslV is capped on each side by a ring-shaped HslU homohexamer. The assembly of the HslU/HslV complex is dependent on binding of ATP.

It localises to the cytoplasm. It carries out the reaction ATP-dependent cleavage of peptide bonds with broad specificity.. With respect to regulation, allosterically activated by HslU binding. In terms of biological role, protease subunit of a proteasome-like degradation complex believed to be a general protein degrading machinery. The protein is ATP-dependent protease subunit HslV of Ectopseudomonas mendocina (strain ymp) (Pseudomonas mendocina).